Reading from the N-terminus, the 213-residue chain is Imidazole glycerol phosphate synthase subunit HisH (213 aa).

The Glutamine amidotransferase type-1 domain maps to 3–213 (MIGVIDYGMG…VGIVTGRENG (211 aa)). Cysteine 81 functions as the Nucleophile in the catalytic mechanism. Active-site residues include histidine 188 and glutamate 190.

In terms of assembly, heterodimer of HisH and HisF.

The protein localises to the cytoplasm. The enzyme catalyses 5-[(5-phospho-1-deoxy-D-ribulos-1-ylimino)methylamino]-1-(5-phospho-beta-D-ribosyl)imidazole-4-carboxamide + L-glutamine = D-erythro-1-(imidazol-4-yl)glycerol 3-phosphate + 5-amino-1-(5-phospho-beta-D-ribosyl)imidazole-4-carboxamide + L-glutamate + H(+). The catalysed reaction is L-glutamine + H2O = L-glutamate + NH4(+). The protein operates within amino-acid biosynthesis; L-histidine biosynthesis; L-histidine from 5-phospho-alpha-D-ribose 1-diphosphate: step 5/9. IGPS catalyzes the conversion of PRFAR and glutamine to IGP, AICAR and glutamate. The HisH subunit catalyzes the hydrolysis of glutamine to glutamate and ammonia as part of the synthesis of IGP and AICAR. The resulting ammonia molecule is channeled to the active site of HisF. In Geobacillus thermodenitrificans (strain NG80-2), this protein is Imidazole glycerol phosphate synthase subunit HisH.